Consider the following 98-residue polypeptide: Co-chaperonin GroES (98 aa).

It belongs to the GroES chaperonin family. Heptamer of 7 subunits arranged in a ring. Interacts with the chaperonin GroEL.

Its subcellular location is the cytoplasm. Together with the chaperonin GroEL, plays an essential role in assisting protein folding. The GroEL-GroES system forms a nano-cage that allows encapsulation of the non-native substrate proteins and provides a physical environment optimized to promote and accelerate protein folding. GroES binds to the apical surface of the GroEL ring, thereby capping the opening of the GroEL channel. The chain is Co-chaperonin GroES from Coprothermobacter proteolyticus (strain ATCC 35245 / DSM 5265 / OCM 4 / BT).